A 440-amino-acid chain; its full sequence is Histidinol dehydrogenase (440 aa).

NAD(+)-binding residues include Y139, Q201, and N224. S247, Q269, and H272 together coordinate substrate. Q269 and H272 together coordinate Zn(2+). Catalysis depends on proton acceptor residues E337 and H338. Residues H338, D371, E425, and H430 each coordinate substrate. D371 is a binding site for Zn(2+). H430 serves as a coordination point for Zn(2+).

This sequence belongs to the histidinol dehydrogenase family. The cofactor is Zn(2+).

It catalyses the reaction L-histidinol + 2 NAD(+) + H2O = L-histidine + 2 NADH + 3 H(+). Its pathway is amino-acid biosynthesis; L-histidine biosynthesis; L-histidine from 5-phospho-alpha-D-ribose 1-diphosphate: step 9/9. Catalyzes the sequential NAD-dependent oxidations of L-histidinol to L-histidinaldehyde and then to L-histidine. This is Histidinol dehydrogenase from Prochlorococcus marinus (strain MIT 9312).